Reading from the N-terminus, the 194-residue chain is Large ribosomal subunit protein uL18 (194 aa).

Belongs to the universal ribosomal protein uL18 family. Part of the 50S ribosomal subunit. Contacts the 5S and 23S rRNAs.

Functionally, this is one of the proteins that bind and probably mediate the attachment of the 5S RNA into the large ribosomal subunit, where it forms part of the central protuberance. In Methanococcus aeolicus (strain ATCC BAA-1280 / DSM 17508 / OCM 812 / Nankai-3), this protein is Large ribosomal subunit protein uL18.